Here is a 463-residue protein sequence, read N- to C-terminus: Glutamate--tRNA ligase 1 (463 aa).

A 'HIGH' region motif is present at residues 10-20 (PSPTGYLHIGG). Positions 238–242 (KLSKR) match the 'KMSKS' region motif. Residue Lys241 coordinates ATP.

This sequence belongs to the class-I aminoacyl-tRNA synthetase family. Glutamate--tRNA ligase type 1 subfamily. In terms of assembly, monomer.

The protein resides in the cytoplasm. It catalyses the reaction tRNA(Glu) + L-glutamate + ATP = L-glutamyl-tRNA(Glu) + AMP + diphosphate. Functionally, catalyzes the attachment of glutamate to tRNA(Glu) in a two-step reaction: glutamate is first activated by ATP to form Glu-AMP and then transferred to the acceptor end of tRNA(Glu). The protein is Glutamate--tRNA ligase 1 of Helicobacter pylori (strain HPAG1).